We begin with the raw amino-acid sequence, 188 residues long: Putative 3-methyladenine DNA glycosylase (188 aa).

This sequence belongs to the DNA glycosylase MPG family.

The chain is Putative 3-methyladenine DNA glycosylase from Ehrlichia ruminantium (strain Gardel).